A 1212-amino-acid chain; its full sequence is Periplasmic/secreted acid trehalase ATH1 (1212 aa).

Topologically, residues 1–82 (MGFKDKILFW…STRVKIRRQN (82 aa)) are cytoplasmic. The helical transmembrane segment at 83 to 103 (ILNTTLILGMLIALVIWTAIL) threads the bilayer. The Periplasmic portion of the chain corresponds to 104–1212 (STNSYFSSSL…ATIREIVLQE (1109 aa)). 7 N-linked (GlcNAc...) asparagine glycosylation sites follow: N243, N275, N296, N362, N414, N428, and N521. 546-547 (WD) contributes to the substrate binding site. N-linked (GlcNAc...) asparagine glycosylation is found at N572, N601, N661, and N671. E677 functions as the Proton donor in the catalytic mechanism. Residues N729 and N738 are each glycosylated (N-linked (GlcNAc...) asparagine). A substrate-binding site is contributed by 744-745 (KQ). N-linked (GlcNAc...) asparagine glycosylation is found at N912, N938, N993, N1011, N1033, N1052, N1070, N1097, and N1165.

Belongs to the glycosyl hydrolase 65 family. Homodimer.

It is found in the secreted. The protein localises to the periplasm. The protein resides in the membrane. The catalysed reaction is alpha,alpha-trehalose + H2O = alpha-D-glucose + beta-D-glucose. In terms of biological role, periplasmic/secreted acid trehalase that catalyzes hydrolysis of the disaccharide trehalose and required for growth on trehalose as carbon source. Growth on trehalose is not restricted to respiration. This is Periplasmic/secreted acid trehalase ATH1 from Candida glabrata (Yeast).